A 228-amino-acid chain; its full sequence is Ribose-5-phosphate isomerase A (228 aa).

Residues 29-32 (TGST), 85-88 (DGAD), and 98-101 (KGGG) each bind substrate. The active-site Proton acceptor is the Glu-107. Lys-125 is a substrate binding site.

Belongs to the ribose 5-phosphate isomerase family. As to quaternary structure, homodimer.

The enzyme catalyses aldehydo-D-ribose 5-phosphate = D-ribulose 5-phosphate. It functions in the pathway carbohydrate degradation; pentose phosphate pathway; D-ribose 5-phosphate from D-ribulose 5-phosphate (non-oxidative stage): step 1/1. Catalyzes the reversible conversion of ribose-5-phosphate to ribulose 5-phosphate. In Staphylococcus aureus (strain MRSA252), this protein is Ribose-5-phosphate isomerase A.